A 101-amino-acid chain; its full sequence is Protamine-3 (101 aa).

The segment at 1-101 (MGSRCAKLST…PSPEPKQTHS (101 aa)) is disordered. The span at 45-67 (EGEEEEEDEEEEEEEEEEEEEEQ) shows a compositional bias: acidic residues. Serine 93 bears the Phosphoserine mark.

It belongs to the protamine P3 family. As to expression, testis.

It localises to the nucleus. The protein localises to the chromosome. Protamines substitute for histones in the chromatin of sperm during the haploid phase of spermatogenesis. They compact sperm DNA into a highly condensed, stable and inactive complex. The polypeptide is Protamine-3 (Prm3) (Mus musculus (Mouse)).